The chain runs to 277 residues: Large ribosomal subunit protein uL2 (277 aa).

Positions 219–277 (TVRGSVMNPNDHPHGGGEGKAPVGRKAPSTPWGKPALGLKTRNKKAKSDKLIVRRRNEK) are disordered. The segment covering 264–277 (AKSDKLIVRRRNEK) has biased composition (basic and acidic residues).

Belongs to the universal ribosomal protein uL2 family. In terms of assembly, part of the 50S ribosomal subunit. Forms a bridge to the 30S subunit in the 70S ribosome.

In terms of biological role, one of the primary rRNA binding proteins. Required for association of the 30S and 50S subunits to form the 70S ribosome, for tRNA binding and peptide bond formation. It has been suggested to have peptidyltransferase activity; this is somewhat controversial. Makes several contacts with the 16S rRNA in the 70S ribosome. This is Large ribosomal subunit protein uL2 from Streptococcus gordonii (strain Challis / ATCC 35105 / BCRC 15272 / CH1 / DL1 / V288).